The following is a 203-amino-acid chain: Snake venom metalloproteinase adamalysin-2 (203 aa).

Positions Arg7–Pro203 constitute a Peptidase M12B domain. Ca(2+) contacts are provided by Glu10 and Asp94. 2 cysteine pairs are disulfide-bonded: Cys118–Cys198 and Cys158–Cys165. His143 is a binding site for Zn(2+). Glu144 is a catalytic residue. Positions 147 and 153 each coordinate Zn(2+). Residues Cys198 and Asn201 each coordinate Ca(2+).

It belongs to the venom metalloproteinase (M12B) family. P-I subfamily. As to quaternary structure, monomer. Requires Zn(2+) as cofactor. As to expression, expressed by the venom gland.

The protein localises to the secreted. It carries out the reaction Cleavage of 1-Phe-|-Val-2, 5-His-|-Leu-6, 14-Ala-|-Leu-15, 15-Leu-|-Tyr-16, and 16-Tyr-|-Leu-17 of insulin B chain.. Functionally, has no significant hemorrhagic activity, but inactivates serpins by limited proteolysis of their reactive-site loops. The polypeptide is Snake venom metalloproteinase adamalysin-2 (Crotalus adamanteus (Eastern diamondback rattlesnake)).